The primary structure comprises 612 residues: MPDYRSKTSTHGRNMAGARALWRATGMKDEDFKKPIIAIANSFTQFVPGHVHLKDLGQLVAREIEKAGGVAKEFNTIAVDDGIAMGHDGMLYSLPSREIIADSVEYMVNAHCADAIVCISNCDKITPGMLMAALRLNIPVVFVSGGPMEAGKTKLASHGLDLVDAMVVAADDSCSDEKVAEYERSACPTCGSCSGMFTANSMNCLTEALGLSLPGNGSTLATHADREQLFLRAGRLAVELCQRYYGEGDDSVLPRNIANFKAFENAMTLDIAMGGSTNTILHLLAAAQEAEVPFDLRDIDRLSRKVPQLCKVAPNIQKYHMEDVHRAGGIFSILGELARGGLLHTDVPTVHSPSMADAIAQWDITQTRDEAVHTFFKAGPAGIPTQTAFSQNTRWPSLDDDRAEGCIRSVEHAYSKEGGLAVLYGNIALDGCVVKTAGVDESIHVFEGSAKIFESQDAAVKGILGDEVKAGDIVIIRYEGPKGGPGMQEMLYPTSYLKSKGLGKQCALLTDGRFSGGTSGLSIGHASPEAAAGGAIGLVQDGDKVLIDIPNRSINLLVSDEELAARRAEQDKKGWKPAAPRARRVSTALKAYALLATSADKGAVRNKALLDG.

Asp81 provides a ligand contact to Mg(2+). Residue Cys122 coordinates [2Fe-2S] cluster. Mg(2+) contacts are provided by Asp123 and Lys124. At Lys124 the chain carries N6-carboxylysine. Cys193 is a binding site for [2Fe-2S] cluster. A Mg(2+)-binding site is contributed by Glu489. The Proton acceptor role is filled by Ser515.

This sequence belongs to the IlvD/Edd family. In terms of assembly, homodimer. Requires [2Fe-2S] cluster as cofactor. The cofactor is Mg(2+).

The enzyme catalyses (2R)-2,3-dihydroxy-3-methylbutanoate = 3-methyl-2-oxobutanoate + H2O. It catalyses the reaction (2R,3R)-2,3-dihydroxy-3-methylpentanoate = (S)-3-methyl-2-oxopentanoate + H2O. It functions in the pathway amino-acid biosynthesis; L-isoleucine biosynthesis; L-isoleucine from 2-oxobutanoate: step 3/4. Its pathway is amino-acid biosynthesis; L-valine biosynthesis; L-valine from pyruvate: step 3/4. Its function is as follows. Functions in the biosynthesis of branched-chain amino acids. Catalyzes the dehydration of (2R,3R)-2,3-dihydroxy-3-methylpentanoate (2,3-dihydroxy-3-methylvalerate) into 2-oxo-3-methylpentanoate (2-oxo-3-methylvalerate) and of (2R)-2,3-dihydroxy-3-methylbutanoate (2,3-dihydroxyisovalerate) into 2-oxo-3-methylbutanoate (2-oxoisovalerate), the penultimate precursor to L-isoleucine and L-valine, respectively. This chain is Dihydroxy-acid dehydratase, found in Pseudomonas aeruginosa (strain LESB58).